A 576-amino-acid chain; its full sequence is Trehalase (576 aa).

The N-terminal stretch at Met-1–Ala-20 is a signal peptide. N-linked (GlcNAc...) asparagine glycosylation is present at Asn-75. Residues Arg-165, Trp-172 to Asp-173, Asn-209, and Arg-218 to Gln-220 contribute to the substrate site. Asn-258 is a glycosylation site (N-linked (GlcNAc...) asparagine). Residues Arg-283–Glu-285 and Gly-316 contribute to the substrate site. The active-site Proton donor/acceptor is Asp-318. Asn-366 is a glycosylation site (N-linked (GlcNAc...) asparagine). The active-site Proton donor/acceptor is the Glu-511. Glu-526 serves as a coordination point for substrate. Residue Ser-553 is the site of GPI-anchor amidated serine attachment. Residues Gly-554–Gln-576 constitute a propeptide, removed in mature form.

It belongs to the glycosyl hydrolase 37 family. In terms of assembly, homodimer; disulfide-linked.

The protein localises to the cell membrane. The enzyme catalyses alpha,alpha-trehalose + H2O = alpha-D-glucose + beta-D-glucose. In terms of biological role, intestinal trehalase is probably involved in the hydrolysis of ingested trehalose. The polypeptide is Trehalase (Mus musculus (Mouse)).